A 1225-amino-acid polypeptide reads, in one-letter code: ATP-dependent helicase/nuclease subunit A (1225 aa).

One can recognise a UvrD-like helicase ATP-binding domain in the interval 11–478 (AQWTDAQWKS…IDLSKNFRSR (468 aa)). 32-39 (AAAGSGKT) contributes to the ATP binding site. Residues 479–790 (KEVLATTNYL…RMMTVHSSKG (312 aa)) form the UvrD-like helicase C-terminal domain. Basic and acidic residues predominate over residues 999 to 1014 (EKPSKQSVSELKRQLE). A disordered region spans residues 999-1018 (EKPSKQSVSELKRQLETEES).

This sequence belongs to the helicase family. AddA subfamily. As to quaternary structure, heterodimer of AddA and AddB/RexB. Mg(2+) serves as cofactor.

It catalyses the reaction Couples ATP hydrolysis with the unwinding of duplex DNA by translocating in the 3'-5' direction.. The enzyme catalyses ATP + H2O = ADP + phosphate + H(+). The heterodimer acts as both an ATP-dependent DNA helicase and an ATP-dependent, dual-direction single-stranded exonuclease. Recognizes the chi site generating a DNA molecule suitable for the initiation of homologous recombination. The AddA nuclease domain is required for chi fragment generation; this subunit has the helicase and 3' -&gt; 5' nuclease activities. The sequence is that of ATP-dependent helicase/nuclease subunit A from Staphylococcus haemolyticus (strain JCSC1435).